We begin with the raw amino-acid sequence, 257 residues long: Homeobox protein goosecoid (257 aa).

Residues 160–219 constitute a DNA-binding region (homeobox); the sequence is KRRHRTIFTDEQLEALENLFQETKYPDVGTREQLARKVHLREEKVEVWFKNRRAKWRRQK. Residues 213-257 form a disordered region; that stretch reads AKWRRQKRSSSEESENAEKWNKTSSSKASPEKREEEGKSDLDSDS. The segment covering 241–257 has biased composition (basic and acidic residues); the sequence is SPEKREEEGKSDLDSDS.

It belongs to the paired homeobox family. Bicoid subfamily.

It localises to the nucleus. Functionally, regulates chordin (CHRD). May play a role in spatial programing within discrete embryonic fields or lineage compartments during organogenesis. In concert with NKX3-2, plays a role in defining the structural components of the middle ear; required for the development of the entire tympanic ring. Probably involved in the regulatory networks that define neural crest cell fate specification and determine mesoderm cell lineages in mammals. The protein is Homeobox protein goosecoid (GSC) of Homo sapiens (Human).